The sequence spans 1157 residues: Folliculin-interacting protein 1 (1157 aa).

The 431-residue stretch at 37 to 467 folds into the uDENN FNIP1/2-type domain; the sequence is FDPSQIRLIV…TVMPNGQPPI (431 aa). Disordered stretches follow at residues 92–120, 616–665, 769–796, and 904–955; these read PGGD…CPKY, SQQE…TKVE, SPPT…NRDC, and VPHG…NYYG. Positions 95 to 111 are enriched in low complexity; sequence DSSSSLDSSINSSSSFS. The region spanning 475–1083 is the cDENN FNIP1/2-type domain; it reads SSQSVDMLAK…VSNLLHSTLQ (609 aa). Positions 651–664 are enriched in basic and acidic residues; the sequence is ADGHQPRTCQDTKV. Positions 904-916 are enriched in basic and acidic residues; the sequence is VPHGDRENAEKKV. Residues 1093–1148 enclose the dDENN FNIP1/2-type domain; it reads FCVMHLEDRLQELYFKSKMLSEYLKGQMRVHVKELGVVLGIESSDLPLLAAVASTH.

The protein belongs to the FNIP family. Homodimer and homomultimer. Heterodimer and heteromultimer with FNIP2. Component of the lysosomal folliculin complex (LFC).

It localises to the lysosome membrane. Its subcellular location is the cytoplasm. The protein localises to the cytosol. In terms of biological role, binding partner of the GTPase-activating protein FLCN: involved in the cellular response to amino acid availability by regulating the non-canonical mTORC1 signaling cascade controlling the MiT/TFE factors TFEB and TFE3. Required to promote FLCN recruitment to lysosomes and interaction with Rag GTPases, leading to activation of the non-canonical mTORC1 signaling. In low-amino acid conditions, component of the lysosomal folliculin complex (LFC) on the membrane of lysosomes, which inhibits the GTPase-activating activity of FLCN, thereby inactivating mTORC1 and promoting nuclear translocation of TFEB and TFE3. Upon amino acid restimulation, disassembly of the LFC complex liberates the GTPase-activating activity of FLCN, leading to activation of mTORC1 and subsequent inactivation of TFEB and TFE3. In addition to its role in mTORC1 signaling, also acts as a co-chaperone of HSP90AA1/Hsp90: inhibits the ATPase activity of HSP90AA1/Hsp90, leading to activate both kinase and non-kinase client proteins of HSP90AA1/Hsp90. Acts as a scaffold to load client protein FLCN onto HSP90AA1/Hsp90. This Gallus gallus (Chicken) protein is Folliculin-interacting protein 1.